A 582-amino-acid chain; its full sequence is Aspartate--tRNA ligase (582 aa).

Glu174 serves as a coordination point for L-aspartate. The interval 198-201 is aspartate; sequence QITK. Arg220 is an L-aspartate binding site. Residues 220–222 and Gln229 contribute to the ATP site; that span reads RDE. Residue His443 participates in L-aspartate binding. ATP is bound at residue Glu477. Arg484 lines the L-aspartate pocket. Residue 529 to 532 coordinates ATP; it reads GLDR.

The protein belongs to the class-II aminoacyl-tRNA synthetase family. Type 1 subfamily. Homodimer.

It localises to the cytoplasm. The catalysed reaction is tRNA(Asp) + L-aspartate + ATP = L-aspartyl-tRNA(Asp) + AMP + diphosphate. Functionally, catalyzes the attachment of L-aspartate to tRNA(Asp) in a two-step reaction: L-aspartate is first activated by ATP to form Asp-AMP and then transferred to the acceptor end of tRNA(Asp). The polypeptide is Aspartate--tRNA ligase (Streptococcus pyogenes serotype M6 (strain ATCC BAA-946 / MGAS10394)).